Reading from the N-terminus, the 90-residue chain is MDDMSPRLRAFLSEPIGEKDVAWVDGISRELAINLVTKGFNKAYVLLGQFLLMHKNEAEFQRWIICCCGATECEARQSSTCLKEWCSCFL.

Homodimer. Heterodimerizes with BANF1.

The protein resides in the nucleus. The protein localises to the cytoplasm. May play a role in BANF1 regulation and influence tissue-specific roles of BANF1. This is Barrier-to-autointegration factor-like protein (Banf2) from Mus musculus (Mouse).